Consider the following 83-residue polypeptide: MKTLLLTLVVVTMVCLDLAYTRRCYNQQSSQPKTTKSCPPGENSCYNKQWRDHRGSITERGCGCPKVKPGIKLRCCESEDCNN.

The signal sequence occupies residues 1–21 (MKTLLLTLVVVTMVCLDLAYT). Disulfide bonds link C24/C45, C38/C62, C64/C75, and C76/C81.

The protein belongs to the three-finger toxin family. Short-chain subfamily. Type I alpha-neurotoxin sub-subfamily. In terms of tissue distribution, expressed by the venom gland.

The protein resides in the secreted. In terms of biological role, binds to muscle nicotinic acetylcholine receptor (nAChR) and inhibit acetylcholine from binding to the receptor, thereby impairing neuromuscular transmission. The protein is Short neurotoxin C of Laticauda colubrina (Yellow-lipped sea krait).